A 337-amino-acid chain; its full sequence is MIARIWSGASRLYWLLLPFSWLYGLITALIRFSYRRGWRKVHRFPLPIVVVGNLTAGGNGKTPVVLWLVAQLQQRGWRVGVVSRGYGGRAARYPLLLDATTTSDQCGDEPLLIWQRTGAPVAVAPRRSEAVAALLRAQSLDVVVTDDGLQHYALGRDIEWVVIDGERRFGNGWWLPAGPMRERAGRLQTVQAVIVNGGDARPGEVPMRLAAGPAVNLLSGERRALASLAPIVAIAGIGHPPRFFATLRAGGVTPVREVAFGDHQAYQQQMLDALVALEERLLMTEKDAVKCRAFARANWWYLPVDAQLPAGAEEALLTPILQAIRRCRPTADGEAKL.

55–62 (TAGGNGKT) is a binding site for ATP.

Belongs to the LpxK family.

It carries out the reaction a lipid A disaccharide + ATP = a lipid IVA + ADP + H(+). Its pathway is glycolipid biosynthesis; lipid IV(A) biosynthesis; lipid IV(A) from (3R)-3-hydroxytetradecanoyl-[acyl-carrier-protein] and UDP-N-acetyl-alpha-D-glucosamine: step 6/6. In terms of biological role, transfers the gamma-phosphate of ATP to the 4'-position of a tetraacyldisaccharide 1-phosphate intermediate (termed DS-1-P) to form tetraacyldisaccharide 1,4'-bis-phosphate (lipid IVA). The polypeptide is Tetraacyldisaccharide 4'-kinase (Sodalis glossinidius (strain morsitans)).